A 632-amino-acid chain; its full sequence is tRNA uridine 5-carboxymethylaminomethyl modification enzyme MnmG (632 aa).

FAD is bound by residues 13–18 (GGGHAG), Val-125, and Ser-180. 273–287 (GPRYCPSIEDKVMRF) contacts NAD(+). Gln-370 contacts FAD.

This sequence belongs to the MnmG family. As to quaternary structure, homodimer. Heterotetramer of two MnmE and two MnmG subunits. FAD is required as a cofactor.

The protein resides in the cytoplasm. In terms of biological role, NAD-binding protein involved in the addition of a carboxymethylaminomethyl (cmnm) group at the wobble position (U34) of certain tRNAs, forming tRNA-cmnm(5)s(2)U34. The chain is tRNA uridine 5-carboxymethylaminomethyl modification enzyme MnmG from Vibrio vulnificus (strain YJ016).